The chain runs to 461 residues: MEKYVVVLAAGKGTRMKSKLYKVLHKVCGKTMVEHVVDAASGINPTKIVTVVGTGAGEVEKILANKSDFAFQEKQVGTGDAVMTAKEALGDKEGATLVVTGDTPLFTTDTFNELFKYHAEKGNAATVLTAEAPNPFGYGRIIRDNQGNVLRIVEQKDGNPDELKVKEINTGVFCFDNQKLFEALKHVDNDNAQGEYYLTDVLEILRNNGERVGAYKMPDFSESLGVNDRVALAQATKTMQRRINEAHMRDGVSFIDPDTAYIDADVKIGNDTVIEGNVVIKGNTEIGSDCYITNGSRIVDSKIGNGVTITSSTIEEAEMDDNTDIGPNSHLRPKAIIRKGAHIGNFVEIKKAEIGENTKVGHLTYVGDATLGKDINIGCGTIFSNYDGVKKFHTNVGDHSFIGAGSTLIAPINVADHAFIAADSTITKDVGKYDMAIARGRQTNKEDYWHKLPLSKDKDWE.

Residues 1–229 (MEKYVVVLAA…FSESLGVNDR (229 aa)) are pyrophosphorylase. Residues 8–11 (LAAG), K22, Q72, and 77–78 (GT) each bind UDP-N-acetyl-alpha-D-glucosamine. D102 is a binding site for Mg(2+). UDP-N-acetyl-alpha-D-glucosamine contacts are provided by G139, E154, N169, and N227. Position 227 (N227) interacts with Mg(2+). The linker stretch occupies residues 230-250 (VALAQATKTMQRRINEAHMRD). The tract at residues 251 to 461 (GVSFIDPDTA…LPLSKDKDWE (211 aa)) is N-acetyltransferase. UDP-N-acetyl-alpha-D-glucosamine contacts are provided by R332 and K350. Catalysis depends on H362, which acts as the Proton acceptor. Y365 and N376 together coordinate UDP-N-acetyl-alpha-D-glucosamine. Residues 385–386 (NY), A422, and R439 each bind acetyl-CoA.

This sequence in the N-terminal section; belongs to the N-acetylglucosamine-1-phosphate uridyltransferase family. In the C-terminal section; belongs to the transferase hexapeptide repeat family. In terms of assembly, homotrimer. Requires Mg(2+) as cofactor.

The protein localises to the cytoplasm. It carries out the reaction alpha-D-glucosamine 1-phosphate + acetyl-CoA = N-acetyl-alpha-D-glucosamine 1-phosphate + CoA + H(+). The catalysed reaction is N-acetyl-alpha-D-glucosamine 1-phosphate + UTP + H(+) = UDP-N-acetyl-alpha-D-glucosamine + diphosphate. Its pathway is nucleotide-sugar biosynthesis; UDP-N-acetyl-alpha-D-glucosamine biosynthesis; N-acetyl-alpha-D-glucosamine 1-phosphate from alpha-D-glucosamine 6-phosphate (route II): step 2/2. The protein operates within nucleotide-sugar biosynthesis; UDP-N-acetyl-alpha-D-glucosamine biosynthesis; UDP-N-acetyl-alpha-D-glucosamine from N-acetyl-alpha-D-glucosamine 1-phosphate: step 1/1. It functions in the pathway bacterial outer membrane biogenesis; LPS lipid A biosynthesis. Its function is as follows. Catalyzes the last two sequential reactions in the de novo biosynthetic pathway for UDP-N-acetylglucosamine (UDP-GlcNAc). The C-terminal domain catalyzes the transfer of acetyl group from acetyl coenzyme A to glucosamine-1-phosphate (GlcN-1-P) to produce N-acetylglucosamine-1-phosphate (GlcNAc-1-P), which is converted into UDP-GlcNAc by the transfer of uridine 5-monophosphate (from uridine 5-triphosphate), a reaction catalyzed by the N-terminal domain. This Lactobacillus helveticus (strain DPC 4571) protein is Bifunctional protein GlmU.